The primary structure comprises 485 residues: Probable trichothecene esterase SAT6 (485 aa).

A disordered region spans residues 1–23 (MPQDPNTTLQMSSSKPSLSDLSV). Low complexity predominate over residues 9–23 (LQMSSSKPSLSDLSV). Active-site charge relay system residues include serine 262, aspartate 406, and histidine 438.

Belongs to the AB hydrolase superfamily. Lipase family.

It participates in mycotoxin biosynthesis. Probable trichothecene esterase; part of the satratoxin SC1 cluster involved in the biosynthesis of satratoxins, trichothecene mycotoxins that are associated with human food poisonings. Satratoxins are suggested to be made by products of multiple gene clusters (SC1, SC2 and SC3) that encode 21 proteins in all, including polyketide synthases, acetyltransferases, and other enzymes expected to modify the trichothecene skeleton. SC1 encodes 10 proteins, SAT1 to SAT10. The largest are SAT8, which encodes a putative polyketide synthase (PKS) with a conventional non-reducing architecture, and SAT10, a putative protein containing four ankyrin repeats and thus may be involved in protein scaffolding. The putative short-chain reductase SAT3 may assist the PKS in some capacity. SAT6 contains a secretory lipase domain and acts probably as a trichothecene esterase. SAT5 encodes a putative acetyltransferase, and so, with SAT6, may affect endogenous protection from toxicity. The probable transcription factor SAT9 may regulate the expression of the SC1 cluster. SC2 encodes proteins SAT11 to SAT16, the largest of which encodes the putative reducing PKS SAT13. SAT11 is a cytochrome P450 monooxygenase, while SAT14 and SAT16 are probable acetyltransferases. The SC2 cluster may be regulated by the transcription factor SAT15. SC3 is a small cluster that encodes 5 proteins, SAT17 to SAT21. SAT21 is a putative MFS-type transporter which may have a role in exporting secondary metabolites. The four other proteins putatively encoded in SC3 include the taurine hydroxylase-like protein SAT17, the O-methyltransferase SAT18, the acetyltransferase SAT19, and the Cys6-type zinc finger SAT20, the latter being probably involved in regulation of SC3 expression. This chain is Probable trichothecene esterase SAT6, found in Stachybotrys chartarum (strain CBS 109288 / IBT 7711) (Toxic black mold).